A 255-amino-acid polypeptide reads, in one-letter code: Indole-3-glycerol phosphate synthase (255 aa).

This sequence belongs to the TrpC family.

The enzyme catalyses 1-(2-carboxyphenylamino)-1-deoxy-D-ribulose 5-phosphate + H(+) = (1S,2R)-1-C-(indol-3-yl)glycerol 3-phosphate + CO2 + H2O. Its pathway is amino-acid biosynthesis; L-tryptophan biosynthesis; L-tryptophan from chorismate: step 4/5. This chain is Indole-3-glycerol phosphate synthase, found in Streptococcus pneumoniae (strain Hungary19A-6).